The following is a 345-amino-acid chain: UDP-3-O-acylglucosamine N-acyltransferase (345 aa).

Histidine 252 (proton acceptor) is an active-site residue.

Belongs to the transferase hexapeptide repeat family. LpxD subfamily. Homotrimer.

The catalysed reaction is a UDP-3-O-[(3R)-3-hydroxyacyl]-alpha-D-glucosamine + a (3R)-hydroxyacyl-[ACP] = a UDP-2-N,3-O-bis[(3R)-3-hydroxyacyl]-alpha-D-glucosamine + holo-[ACP] + H(+). The protein operates within bacterial outer membrane biogenesis; LPS lipid A biosynthesis. In terms of biological role, catalyzes the N-acylation of UDP-3-O-acylglucosamine using 3-hydroxyacyl-ACP as the acyl donor. Is involved in the biosynthesis of lipid A, a phosphorylated glycolipid that anchors the lipopolysaccharide to the outer membrane of the cell. The chain is UDP-3-O-acylglucosamine N-acyltransferase from Rickettsia rickettsii.